Consider the following 420-residue polypeptide: Glucose-1-phosphate adenylyltransferase (420 aa).

Alpha-D-glucose 1-phosphate contacts are provided by residues Tyr-107, Gly-172, Glu-187 to Lys-188, and Ser-205.

Belongs to the bacterial/plant glucose-1-phosphate adenylyltransferase family. As to quaternary structure, homotetramer.

It catalyses the reaction alpha-D-glucose 1-phosphate + ATP + H(+) = ADP-alpha-D-glucose + diphosphate. Its pathway is glycan biosynthesis; glycogen biosynthesis. Its function is as follows. Involved in the biosynthesis of ADP-glucose, a building block required for the elongation reactions to produce glycogen. Catalyzes the reaction between ATP and alpha-D-glucose 1-phosphate (G1P) to produce pyrophosphate and ADP-Glc. The chain is Glucose-1-phosphate adenylyltransferase from Bradyrhizobium diazoefficiens (strain JCM 10833 / BCRC 13528 / IAM 13628 / NBRC 14792 / USDA 110).